A 264-amino-acid chain; its full sequence is Acetyl-coenzyme A carboxylase carboxyl transferase subunit beta (264 aa).

One can recognise a CoA carboxyltransferase N-terminal domain in the interval 4 to 264; the sequence is LWVKCKQCQQ…CGNSLEGVES (261 aa). Zn(2+) is bound by residues C8, C11, C27, and C29. A C4-type zinc finger spans residues 8–29; it reads CKQCQQILLTKELEKNLKVCRC.

The protein belongs to the AccD/PCCB family. As to quaternary structure, acetyl-CoA carboxylase is a heterohexamer composed of biotin carboxyl carrier protein (AccB), biotin carboxylase (AccC) and two subunits each of ACCase subunit alpha (AccA) and ACCase subunit beta (AccD). The cofactor is Zn(2+).

It is found in the cytoplasm. The enzyme catalyses N(6)-carboxybiotinyl-L-lysyl-[protein] + acetyl-CoA = N(6)-biotinyl-L-lysyl-[protein] + malonyl-CoA. It functions in the pathway lipid metabolism; malonyl-CoA biosynthesis; malonyl-CoA from acetyl-CoA: step 1/1. Its function is as follows. Component of the acetyl coenzyme A carboxylase (ACC) complex. Biotin carboxylase (BC) catalyzes the carboxylation of biotin on its carrier protein (BCCP) and then the CO(2) group is transferred by the transcarboxylase to acetyl-CoA to form malonyl-CoA. The protein is Acetyl-coenzyme A carboxylase carboxyl transferase subunit beta of Heliobacterium modesticaldum (strain ATCC 51547 / Ice1).